The chain runs to 397 residues: Argininosuccinate synthase (397 aa).

8–16 serves as a coordination point for ATP; that stretch reads AYSGGLDTS. Positions 86 and 91 each coordinate L-citrulline. Residue G116 coordinates ATP. L-aspartate-binding residues include T118, N122, and D123. N122 is a binding site for L-citrulline. L-citrulline contacts are provided by R126, S175, S184, E260, and Y272.

This sequence belongs to the argininosuccinate synthase family. Type 1 subfamily. In terms of assembly, homotetramer.

It localises to the cytoplasm. The catalysed reaction is L-citrulline + L-aspartate + ATP = 2-(N(omega)-L-arginino)succinate + AMP + diphosphate + H(+). It participates in amino-acid biosynthesis; L-arginine biosynthesis; L-arginine from L-ornithine and carbamoyl phosphate: step 2/3. This Clostridium botulinum (strain Okra / Type B1) protein is Argininosuccinate synthase.